A 1009-amino-acid polypeptide reads, in one-letter code: Helicase-like transcription factor (1009 aa).

Arg-27 is subject to Omega-N-methylarginine. A DNA-binding region spans residues 38-287; that stretch reads EFQDVIPPDD…FSEKDRPENV (250 aa). A Glycyl lysine isopeptide (Lys-Gly) (interchain with G-Cter in SUMO2) cross-link involves residue Lys-112. Residue Tyr-195 is modified to Phosphotyrosine; by JAK2. Lys-211 is covalently cross-linked (Glycyl lysine isopeptide (Lys-Gly) (interchain with G-Cter in SUMO2)). 294-301 serves as a coordination point for ATP; the sequence is DDMGLGKT. The disordered stretch occupies residues 336-365; that stretch reads DDSMKLGGNNTSEKADGLSKDASRCSEQPS. Basic and acidic residues predominate over residues 348-359; it reads EKADGLSKDASR. Phosphoserine is present on residues Ser-397, Ser-398, and Ser-400. The Helicase ATP-binding domain occupies 435–606; sequence IEDVAFACAL…WSLLSFLKLK (172 aa). Residues 557–560 carry the DEGH box motif; it reads DEGH. Phosphothreonine is present on Thr-736. The segment at 760–801 adopts an RING-type zinc-finger fold; the sequence is CAICLDSLTVPVITHCAHVFCKPCICQVIQNEQPHAKCPLCR. The Helicase C-terminal domain occupies 837 to 996; the sequence is ALMHALTDLR…TKKPNADEMK (160 aa). Residues 925–1009 are interaction with SP1 and SP3; sequence SRVFLMDPAW…INEIRTLIDL (85 aa).

This sequence belongs to the SNF2/RAD54 helicase family. RAD16 subfamily. In terms of assembly, interacts with SP1 and SP3 independently of DNA; the interaction with these transcriptional factors may be required for basal transcription of target genes. Interacts with EGR1; the interaction requires prior binding to DNA and represses c-Rel via a DNA looping mechanism. Interacts with GATA4. Interacts with PCNA; the interaction promotes polyubiquitination of PCNA through association with the UBE2B-RAD18 and UBE2V2-UBE2N ubiquitin ligase complexes. Interacts with RAD18, SHPRH, UBE2V2 and UBE2N. As to expression, expressed in brain, heart, kidney, liver, lung, pancreas, placenta and skeletal muscle.

The protein localises to the cytoplasm. Its subcellular location is the nucleus. It is found in the nucleolus. It localises to the nucleoplasm. It catalyses the reaction S-ubiquitinyl-[E2 ubiquitin-conjugating enzyme]-L-cysteine + [acceptor protein]-L-lysine = [E2 ubiquitin-conjugating enzyme]-L-cysteine + N(6)-ubiquitinyl-[acceptor protein]-L-lysine.. Its pathway is protein modification; protein ubiquitination. Functionally, has both helicase and E3 ubiquitin ligase activities. Possesses intrinsic ATP-dependent nucleosome-remodeling activity; This activity may be required for transcriptional activation or repression of specific target promoters. These may include the SERPINE1 and HIV-1 promoters and the SV40 enhancer, to which this protein can bind directly. Plays a role in error-free postreplication repair (PRR) of damaged DNA and maintains genomic stability through acting as a ubiquitin ligase for 'Lys-63'-linked polyubiquitination of chromatin-bound PCNA. This Homo sapiens (Human) protein is Helicase-like transcription factor (HLTF).